The sequence spans 102 residues: Flagellar hook-basal body complex protein FliE (102 aa).

This sequence belongs to the FliE family.

It is found in the bacterial flagellum basal body. This Oceanobacillus iheyensis (strain DSM 14371 / CIP 107618 / JCM 11309 / KCTC 3954 / HTE831) protein is Flagellar hook-basal body complex protein FliE.